We begin with the raw amino-acid sequence, 128 residues long: Phycoerythrin alpha-3 chain, chloroplastic (128 aa).

A chloroplast-targeting transit peptide spans 1–52; sequence MFAKTLASLAVIGSAAAYVPMMSMDMGRREVVQAGAAAAAVTPFLSGAPAGA. Lys56 is subject to 5-hydroxylysine. Residues 70-89 are disordered; sequence GCSRAPKESTGGKAGGQDDE. 15,16-dihydrobiliverdin contacts are provided by residues Cys71, Arg73, 77–78, and Lys93; that span reads ES.

It belongs to the phycoerythrin family. Heterotetramer of 2 different alpha chains and 2 identical beta chains. The subunit composition could comprise of any combination of 2 out of 4 different alpha units with an invariant beta unit. Contains one covalently linked 15,16-dihydrobiliverdin chromophore.

It localises to the plastid. It is found in the chloroplast thylakoid membrane. Light-harvesting photosynthetic tetrapyrrole chromophore-protein from the phycobiliprotein complex. This Rhodomonas sp. (strain CS 24) (Chroomonas sp. (strain CS24)) protein is Phycoerythrin alpha-3 chain, chloroplastic (cpeA3).